A 155-amino-acid polypeptide reads, in one-letter code: UPF0225 protein ECA2332 (155 aa).

This sequence belongs to the UPF0225 family.

This is UPF0225 protein ECA2332 from Pectobacterium atrosepticum (strain SCRI 1043 / ATCC BAA-672) (Erwinia carotovora subsp. atroseptica).